Consider the following 231-residue polypeptide: Putative cobalt transport protein CbiM 2 (231 aa).

Helical transmembrane passes span 8–28 (LPIG…IYGI), 41–61 (VLPL…LKIP), 75–95 (LSAA…VLLF), 108–128 (LGAN…LVFV), 136–156 (VGIG…TYTV), and 176–196 (IAFA…EGII).

This sequence belongs to the CbiM family. As to quaternary structure, forms an energy-coupling factor (ECF) transporter complex composed of an ATP-binding protein (A component, CbiO), a transmembrane protein (T component, CbiQ) and 2 possible substrate-capture proteins (S components, CbiM and CbiN) of unknown stoichimetry.

It is found in the cell membrane. It participates in cofactor biosynthesis; adenosylcobalamin biosynthesis. Part of the energy-coupling factor (ECF) transporter complex CbiMNOQ involved in cobalt import. This is Putative cobalt transport protein CbiM 2 from Methanocorpusculum labreanum (strain ATCC 43576 / DSM 4855 / Z).